Consider the following 121-residue polypeptide: Large ribosomal subunit protein uL14 (121 aa).

This sequence belongs to the universal ribosomal protein uL14 family. As to quaternary structure, part of the 50S ribosomal subunit. Forms a cluster with proteins L3 and L19. In the 70S ribosome, L14 and L19 interact and together make contacts with the 16S rRNA in bridges B5 and B8.

Functionally, binds to 23S rRNA. Forms part of two intersubunit bridges in the 70S ribosome. This is Large ribosomal subunit protein uL14 from Synechococcus sp. (strain WH7803).